We begin with the raw amino-acid sequence, 388 residues long: Proteasomal ubiquitin receptor ADRM1 homolog rpn1302 (388 aa).

One can recognise a Pru domain in the interval Arg15–Pro132. 2 disordered regions span residues Arg202–Thr227 and Ser368–Glu388. The span at Ser368–Asp377 shows a compositional bias: acidic residues. The span at Val378 to Glu388 shows a compositional bias: basic and acidic residues.

This sequence belongs to the ADRM1 family. As to quaternary structure, component of the 19S proteasome regulatory particle complex. The 2 S.pombe rpn13 homologs, rpn1301 and rpn1302 are present at a 0.2-1 ratio.

It is found in the cytoplasm. The protein resides in the nucleus. Functionally, component of the 26S proteasome, a multiprotein complex involved in the ATP-dependent degradation of ubiquitinated proteins. This complex plays a key role in the maintenance of protein homeostasis by removing misfolded or damaged proteins, which could impair cellular functions, and by removing proteins whose functions are no longer required. Therefore, the proteasome participates in numerous cellular processes, including cell cycle progression, apoptosis, or DNA damage repair. Within the complex, functions as a proteasomal ubiquitin receptor. In Schizosaccharomyces pombe (strain 972 / ATCC 24843) (Fission yeast), this protein is Proteasomal ubiquitin receptor ADRM1 homolog rpn1302 (rpn1302).